Reading from the N-terminus, the 106-residue chain is Urease subunit beta (106 aa).

It belongs to the urease beta subunit family. In terms of assembly, heterotrimer of UreA (gamma), UreB (beta) and UreC (alpha) subunits. Three heterotrimers associate to form the active enzyme.

It is found in the cytoplasm. It catalyses the reaction urea + 2 H2O + H(+) = hydrogencarbonate + 2 NH4(+). The protein operates within nitrogen metabolism; urea degradation; CO(2) and NH(3) from urea (urease route): step 1/1. The chain is Urease subunit beta from Synechococcus sp. (strain CC9902).